A 223-amino-acid polypeptide reads, in one-letter code: Translation initiation factor 6 (223 aa).

The protein belongs to the eIF-6 family.

In terms of biological role, binds to the 50S ribosomal subunit and prevents its association with the 30S ribosomal subunit to form the 70S initiation complex. In Methanobrevibacter smithii (strain ATCC 35061 / DSM 861 / OCM 144 / PS), this protein is Translation initiation factor 6.